A 475-amino-acid chain; its full sequence is MSQKNVGKIVQILGPVVDISFAGQKIPAIYNNLELVFENNKYNFEVAQHIGDEVVRTISMVSTNGLSRGLEVIDTGAPIMVPVGKEVLSRMFNVLGQTIDNKGEIEAKEFRSIHASAPSYEEQNDSSEILETGIKVIDLLVPYSKGGKIGLFGGAGVGKTVLVQELINNIATQHGGLSVFAGVGERTREGNDLYHEMIASGVLDKTTLVFGQMNEPPGARMRVALTGLTMAEYFRDKFKQDVLLFIDNIFRFTQAGSEVSALLGRMPSAVGYQPTLATEMGQLQERITSTKNGSITSVQAVYVPADDLTDPAPATTFTHLDAKTVLERNIAALGIYPAIDPLASSSRMLDPLIIGNEHYLVALEVQNILQRFKELQDIIAILGIGELSEEDKKLVFRARKIRNFLSQPFTVAEKFSGKKGKFVPLKETIRSFKEILEGKHDNLPEDAFLYVGSIDEAIEKAKGQSNATTANNNNA.

Residue 153–160 (GGAGVGKT) coordinates ATP.

This sequence belongs to the ATPase alpha/beta chains family. In terms of assembly, F-type ATPases have 2 components, CF(1) - the catalytic core - and CF(0) - the membrane proton channel. CF(1) has five subunits: alpha(3), beta(3), gamma(1), delta(1), epsilon(1). CF(0) has three main subunits: a(1), b(2) and c(9-12). The alpha and beta chains form an alternating ring which encloses part of the gamma chain. CF(1) is attached to CF(0) by a central stalk formed by the gamma and epsilon chains, while a peripheral stalk is formed by the delta and b chains.

It is found in the cell membrane. It carries out the reaction ATP + H2O + 4 H(+)(in) = ADP + phosphate + 5 H(+)(out). Its function is as follows. Produces ATP from ADP in the presence of a proton gradient across the membrane. The catalytic sites are hosted primarily by the beta subunits. The chain is ATP synthase subunit beta 1 from Mycoplasmopsis pulmonis (strain UAB CTIP) (Mycoplasma pulmonis).